Reading from the N-terminus, the 257-residue chain is Transmembrane protein 101 (257 aa).

8 helical membrane-spanning segments follow: residues 21–40 (VLLT…LYAE), 52–72 (VPYL…MSFG), 77–97 (WFAL…YIGG), 110–130 (YSRT…AGEL), 139–159 (SLQS…AYSL), 182–202 (LFFV…YVTL), 206–226 (ILAV…AYWH), and 233–253 (FWNQ…AVIL).

Its subcellular location is the membrane. Functionally, may activate NF-kappa-B signaling pathways. This chain is Transmembrane protein 101 (TMEM101), found in Homo sapiens (Human).